A 433-amino-acid polypeptide reads, in one-letter code: MLELIEVNGTPGSQLSTPRSGKSPSPSPTSPGSLRKQRISQHGGSSTSLSSTKVCSSMDENDGPGEEESDEGFQIPATITERYKVGRTIGDGNFAVVKECIERSTAREYALKIIKKSKCRGKEHMIQNEVSILRRVKHPNIVLLIEEMDVPTELYLVMELVKGGDLFDAITSTSKYTERDASGMLYNLASAIKYLHSLNIVHRDIKPENLLVYEHQDGSKSLKLGDFGLATIVDGPLYTVCGTPTYVAPEIIAETGYGLKVDIWAAGVITYILLCGFPPFRGSGDDQEVLFDQILMGQVDFPSPYWDNVSDSAKELINMMLLVNVDQRFSAVQVLEHPWVNDDGLPENEHQLSVAGKIKKHFNTGPKPSSTAAGVSVIATTALDKERQVFRRRRNQDVRGRYKAQPAPPELNSESEDYSPSSSETVRSPNSPF.

Positions 1–74 are disordered; sequence MLELIEVNGT…GEEESDEGFQ (74 aa). A phosphoserine mark is found at Ser23, Ser25, Ser27, Ser30, Ser40, Ser45, Ser46, Ser48, Ser57, and Ser69. Residues 40-57 are compositionally biased toward low complexity; the sequence is SQHGGSSTSLSSTKVCSS. The segment covering 59–71 has biased composition (acidic residues); the sequence is DENDGPGEEESDE. The region spanning 83–340 is the Protein kinase domain; sequence YKVGRTIGDG…AVQVLEHPWV (258 aa). ATP is bound by residues 89-97 and Lys112; that span reads IGDGNFAVV. The active-site Proton acceptor is the Asp204. Position 213 is a phosphotyrosine (Tyr213). Over residues 388 to 400 the composition is skewed to basic and acidic residues; that stretch reads QVFRRRRNQDVRG. The segment at 388 to 433 is disordered; that stretch reads QVFRRRRNQDVRGRYKAQPAPPELNSESEDYSPSSSETVRSPNSPF. A phosphoserine mark is found at Ser419, Ser428, and Ser431.

This sequence belongs to the protein kinase superfamily. CAMK Ser/Thr protein kinase family. CaMK subfamily.

It catalyses the reaction L-seryl-[protein] + ATP = O-phospho-L-seryl-[protein] + ADP + H(+). The enzyme catalyses L-threonyl-[protein] + ATP = O-phospho-L-threonyl-[protein] + ADP + H(+). In terms of biological role, probable kinase that may be involved in a calcium-signaling pathway controlling neuronal migration in the developing brain. May also participate in functions of the mature nervous system. The polypeptide is Serine/threonine-protein kinase DCLK1 (Dclk1) (Rattus norvegicus (Rat)).